A 524-amino-acid polypeptide reads, in one-letter code: MTDKSNNPAPASDPSTTETSNDADGSDGQLDAETDPGTSTGPSDLDDVILDNLDAGSDDPSDEASRGLFDDLLEGEPIFENKEVLRPSYTPHKLPHREEQINNMATILVTALRGDTPSNILIYGKTGTGKTASAKFVSEELETTSQKYEVPCEVEYINCEVTDTQYRVLAQLANKFIDKNAQLIDDRIAELEELQSQARENTAALEETAFGSLDDVEAEIESLEADKSEFEEVPMTGWPTDRVYSSFFDAVDYHERVVVIMLDEIDKLVEKSGDDTLYNLSRMNSELENSRVSIMGISNDLKFTDFLDPRVKSSLGEEEIVFPPYDANQLRDILQARSDVAFKGDALTEDVIPLCAAFAAQEHGDARRALDLLRTAGELAERDQTDNVLEDHVRQAQEKIELDRVVEVVRTLPTQSKIVLFAIILLEKNGVHNINTGEVFNIYKNLCEEIDADILTQRRVTDLISELDMLGIVNAVVVSKGRYGRTKEISLSVPTEETEAVLLSDSRLGDIDDVQPFVQARFDN.

Residues 1–23 (MTDKSNNPAPASDPSTTETSNDA) show a composition bias toward polar residues. The segment at 1-67 (MTDKSNNPAP…DDPSDEASRG (67 aa)) is disordered. ATP contacts are provided by residues 128–132 (TGKTA), tyrosine 325, and arginine 337.

The protein belongs to the CDC6/cdc18 family.

In terms of biological role, involved in regulation of DNA replication. The sequence is that of ORC1-type DNA replication protein 4 (cdc6d) from Haloarcula marismortui (strain ATCC 43049 / DSM 3752 / JCM 8966 / VKM B-1809) (Halobacterium marismortui).